Reading from the N-terminus, the 284-residue chain is MKVECASNIGFCFGVRRAINILEKTAAEKGGVETLGALVHNQQVLNRLSGMGVRVVKNIEDISGRTVAISSHGVGPLVLDELKSKGLEVVDTTCPFVKRAQVAAKRFHDAGFFTVIYGDVNHPEVKGIMGWAGGDGLATLNPQGLVDVPDVSRYIGVLSQTTQIPTGFTSFVKNVIDQALVKDAEIRIADTLCHDIRERQTAALELAGRVDLMLVIGGHNSANTRHLLDLCKTVSNTYLIETASELQTGWLRGVNRIGITSGASTDETTISEVCSYLGSLSAGT.

Cys-12 is a binding site for [4Fe-4S] cluster. The (2E)-4-hydroxy-3-methylbut-2-enyl diphosphate site is built by His-40 and His-72. His-40 and His-72 together coordinate dimethylallyl diphosphate. Isopentenyl diphosphate-binding residues include His-40 and His-72. Cys-94 is a [4Fe-4S] cluster binding site. His-122 is a (2E)-4-hydroxy-3-methylbut-2-enyl diphosphate binding site. Residue His-122 participates in dimethylallyl diphosphate binding. Residue His-122 participates in isopentenyl diphosphate binding. The active-site Proton donor is the Glu-124. Position 161 (Thr-161) interacts with (2E)-4-hydroxy-3-methylbut-2-enyl diphosphate. [4Fe-4S] cluster is bound at residue Cys-193. Positions 221, 223, and 264 each coordinate (2E)-4-hydroxy-3-methylbut-2-enyl diphosphate. Dimethylallyl diphosphate is bound by residues Ser-221, Asn-223, and Ser-264. 3 residues coordinate isopentenyl diphosphate: Ser-221, Asn-223, and Ser-264.

It belongs to the IspH family. [4Fe-4S] cluster is required as a cofactor.

The catalysed reaction is isopentenyl diphosphate + 2 oxidized [2Fe-2S]-[ferredoxin] + H2O = (2E)-4-hydroxy-3-methylbut-2-enyl diphosphate + 2 reduced [2Fe-2S]-[ferredoxin] + 2 H(+). It catalyses the reaction dimethylallyl diphosphate + 2 oxidized [2Fe-2S]-[ferredoxin] + H2O = (2E)-4-hydroxy-3-methylbut-2-enyl diphosphate + 2 reduced [2Fe-2S]-[ferredoxin] + 2 H(+). It participates in isoprenoid biosynthesis; dimethylallyl diphosphate biosynthesis; dimethylallyl diphosphate from (2E)-4-hydroxy-3-methylbutenyl diphosphate: step 1/1. The protein operates within isoprenoid biosynthesis; isopentenyl diphosphate biosynthesis via DXP pathway; isopentenyl diphosphate from 1-deoxy-D-xylulose 5-phosphate: step 6/6. Catalyzes the conversion of 1-hydroxy-2-methyl-2-(E)-butenyl 4-diphosphate (HMBPP) into a mixture of isopentenyl diphosphate (IPP) and dimethylallyl diphosphate (DMAPP). Acts in the terminal step of the DOXP/MEP pathway for isoprenoid precursor biosynthesis. The sequence is that of 4-hydroxy-3-methylbut-2-enyl diphosphate reductase from Dehalococcoides mccartyi (strain ATCC BAA-2266 / KCTC 15142 / 195) (Dehalococcoides ethenogenes (strain 195)).